The chain runs to 159 residues: Probable minor fimbrial protein (159 aa).

The propeptide at 1-6 (MKKMHG) is leader sequence. Phe7 carries the post-translational modification N-methylphenylalanine. A helical transmembrane segment spans residues 7–27 (FTLIELMIVVAIIGVLASTAL). Intrachain disulfides connect Cys56–Cys71 and Cys140–Cys153.

Belongs to the N-Me-Phe pilin family. As to quaternary structure, the pili are polar flexible filaments of about 5.4 nanometers diameter and 2.5 micrometers average length; they consist of only a single polypeptide chain arranged in a helical configuration of five subunits per turn in the assembled pilus.

It is found in the fimbrium. It localises to the membrane. This Dichelobacter nodosus (Bacteroides nodosus) protein is Probable minor fimbrial protein (fimZ).